The following is a 340-amino-acid chain: tRNA (cytosine(34)-C(5))-methyltransferase, mitochondrial (340 aa).

Residues 139 to 145, glutamate 162, aspartate 193, and aspartate 211 each bind S-adenosyl-L-methionine; that span reads CAAPGGK. Cysteine 265 functions as the Nucleophile in the catalytic mechanism.

The protein belongs to the class I-like SAM-binding methyltransferase superfamily. RsmB/NOP family.

Its subcellular location is the mitochondrion matrix. The enzyme catalyses cytidine(34) in mitochondrial tRNA + S-adenosyl-L-methionine = 5-methylcytidine(34) in mitochondrial tRNA + S-adenosyl-L-homocysteine + H(+). Functionally, mitochondrial tRNA methyltransferase that mediates methylation of cytosine to 5-methylcytosine (m5C) at position 34 of mt-tRNA(Met). mt-tRNA(Met) methylation at cytosine(34) takes place at the wobble position of the anticodon and initiates the formation of 5-formylcytosine (f(5)c) at this position. mt-tRNA(Met) containing the f(5)c modification at the wobble position enables recognition of the AUA codon in addition to the AUG codon, expanding codon recognition in mitochondrial translation. This chain is tRNA (cytosine(34)-C(5))-methyltransferase, mitochondrial, found in Homo sapiens (Human).